An 863-amino-acid chain; its full sequence is Autotaxin (863 aa).

The signal sequence occupies residues 1-27 (MARRSSFQSCQIISLFTFAVGVNICLG). Positions 28 to 35 (FTAHRIKR) are cleaved as a propeptide — removed by furin. Residue Asn54 is glycosylated (N-linked (GlcNAc...) asparagine). 2 consecutive SMB domains span residues 55–98 (ISGS…LKTA) and 99–143 (RGWE…GESH). Disulfide bonds link Cys59–Cys76, Cys63–Cys94, Cys74–Cys87, Cys80–Cys86, Cys103–Cys120, Cys108–Cys138, Cys118–Cys131, Cys124–Cys130, Cys149–Cys195, and Cys157–Cys351. The short motif at 127-129 (RGD) is the Cell attachment site element. Positions 145-502 (VDDDCEEIKA…STFKYKTKVP (358 aa)) are phosphodiesterase. The Zn(2+) site is built by Asp172 and Thr210. The active-site Nucleophile is the Thr210. 1-(9Z-octadecenoyl)-sn-glycero-3-phosphate is bound by residues Thr210, Asn231, and Asp312. Residues Thr210, Asn231, and Asp312 each coordinate 1-hexadecanoyl-sn-glycero-3-phosphate. Residues Thr210, Asn231, and Asp312 each contribute to the 1-tetradecanoyl-sn-glycerol 3-phosphate site. Residues Asp312, His316, Asp359, and His360 each coordinate Zn(2+). Disulfide bonds link Cys367/Cys469, Cys414/Cys806, Cys567/Cys667, Cys569/Cys652, and Cys775/Cys785. Residue Asn411 is glycosylated (N-linked (GlcNAc...) asparagine). His475 contacts Zn(2+). His475 is a 1-(9Z-octadecenoyl)-sn-glycero-3-phosphate binding site. His475 is a 1-hexadecanoyl-sn-glycero-3-phosphate binding site. His475 is a 1-tetradecanoyl-sn-glycerol 3-phosphate binding site. N-linked (GlcNAc...) asparagine glycosylation is present at Asn525. The segment at 598-863 (LYGRPAVLYR…TYLHTYESEI (266 aa)) is nuclease-like domain. The Ca(2+) site is built by Asp740, Asp742, Asp744, Leu746, and Asp748. N-linked (GlcNAc...) asparagine glycosylation is present at Asn807. The required for secretion stretch occupies residues 830–851 (IEHLTSLDFFRKTSRSYPEILT).

This sequence belongs to the nucleotide pyrophosphatase/phosphodiesterase family. Zn(2+) is required as a cofactor. The cofactor is Ca(2+). N-glycosylation, but not furin-cleavage, plays a critical role on secretion and on lysoPLD activity. Post-translationally, the interdomain disulfide bond between Cys-414 and Cys-806 is essential for catalytic activity. In terms of tissue distribution, detected in blood plasma (at protein level). Predominantly expressed in brain, placenta, ovary, and small intestine. Expressed in a number of carcinomas such as hepatocellular and prostate carcinoma, neuroblastoma and non-small-cell lung cancer. Expressed in body fluids such as plasma, cerebral spinal fluid (CSF), saliva, follicular and amniotic fluids. Not detected in leukocytes. Isoform 1 is more highly expressed in peripheral tissues than in the central nervous system (CNS). Adipocytes only express isoform 1. Isoform 3 is more highly expressed in the brain than in peripheral tissues.

The protein resides in the secreted. The enzyme catalyses a 1-O-alkyl-sn-glycero-3-phosphoethanolamine + H2O = a 1-O-alkyl-sn-glycero-3-phosphate + ethanolamine + H(+). The catalysed reaction is a 1-acyl-sn-glycero-3-phosphoethanolamine + H2O = a 1-acyl-sn-glycero-3-phosphate + ethanolamine + H(+). It catalyses the reaction 1-(9Z-octadecenoyl)-sn-glycero-3-phosphoethanolamine + H2O = 1-(9Z-octadecenoyl)-sn-glycero-3-phosphate + ethanolamine + H(+). It carries out the reaction a 1-O-alkyl-sn-glycero-3-phosphocholine + H2O = a 1-O-alkyl-sn-glycero-3-phosphate + choline + H(+). The enzyme catalyses 1-O-(9Z-octadecenyl)-sn-glycero-3-phosphocholine + H2O = 1-O-(9Z-octadecenyl)-sn-glycero-3-phosphate + choline + H(+). The catalysed reaction is 1-O-hexadecyl-sn-glycero-3-phosphocholine + H2O = 1-O-hexadecyl-sn-glycero-3-phosphate + choline + H(+). It catalyses the reaction a 1-O-(1Z-alkenyl)-sn-glycero-3-phosphocholine + H2O = a 1-O-(1Z-alkenyl)-sn-glycero-3-phosphate + choline + H(+). It carries out the reaction a 1-acyl-sn-glycero-3-phosphocholine + H2O = a 1-acyl-sn-glycero-3-phosphate + choline + H(+). The enzyme catalyses 1-dodecanoyl-sn-glycero-3-phosphocholine + H2O = 1-dodecanoyl-sn-glycerol 3-phosphate + choline + H(+). The catalysed reaction is 1-(9Z-octadecenoyl)-sn-glycero-3-phosphocholine + H2O = 1-(9Z-octadecenoyl)-sn-glycero-3-phosphate + choline + H(+). It catalyses the reaction 1-tetradecanoyl-sn-glycero-3-phosphocholine + H2O = 1-tetradecanoyl-sn-glycerol 3-phosphate + choline + H(+). It carries out the reaction 1-decanoyl-sn-glycero-3-phosphocholine + H2O = 1-decanoyl-sn-glycero-3-phosphate + choline + H(+). The enzyme catalyses 1-octadecanoyl-sn-glycero-3-phosphocholine + H2O = 1-octadecanoyl-sn-glycero-3-phosphate + choline + H(+). The catalysed reaction is 1-hexadecanoyl-sn-glycero-3-phosphocholine + H2O = 1-hexadecanoyl-sn-glycero-3-phosphate + choline + H(+). It catalyses the reaction 1-hexanoyl-sn-glycero-3-phosphocholine + H2O = 1-hexanoyl-sn-glycero-3-phosphate + choline + H(+). It carries out the reaction 1-(9Z,12Z)-octadecadienoyl-sn-glycero-3-phosphocholine + H2O = 1-(9Z,12Z)-octadecadienoyl-sn-glycero-3-phosphate + choline + H(+). The enzyme catalyses sphing-4-enine-phosphocholine + H2O = sphing-4-enine 1-phosphate + choline + H(+). The catalysed reaction is 1-(5Z,8Z,11Z,14Z-eicosatetraenoyl)-sn-glycero-3-phosphocholine + H2O = 1-(5Z,8Z,11Z,14Z-eicosatetraenoyl)-sn-glycero-3-phosphate + choline + H(+). It catalyses the reaction a 2-acyl-sn-glycero-3-phosphocholine + H2O = a 2-acyl-sn-glycerol 3-phosphate + choline + H(+). It carries out the reaction a 1,2-diacyl-sn-glycero-3-phosphocholine + H2O = a 1,2-diacyl-sn-glycero-3-phosphate + choline + H(+). The enzyme catalyses 1,2-dioctanoyl-sn-glycero-3-phosphocholine + H2O = 1,2-dioctanoyl-sn-glycero-3-phosphate + choline + H(+). The catalysed reaction is 1,2-didecanoyl-sn-glycero-3-phosphocholine + H2O = 1,2-didecanoyl-sn-glycero-3-phosphate + choline + H(+). It catalyses the reaction a 1-acyl-sn-glycero-3-phospho-L-serine + H2O = a 1-acyl-sn-glycero-3-phosphate + L-serine + H(+). It carries out the reaction 1-(9Z-octadecenoyl)-sn-glycero-3-phospho-L-serine + H2O = 1-(9Z-octadecenoyl)-sn-glycero-3-phosphate + L-serine + H(+). The enzyme catalyses a 2-acyl-sn-glycero-3-phospho-L-serine + H2O = a 2-acyl-sn-glycerol 3-phosphate + L-serine + H(+). With respect to regulation, inhibited by lysophosphatidic acid (LPA) and sphingosine-1-phosphate (S1P). Inhibited by EDTA and EGTA. In terms of biological role, secreted lysophospholipase D that hydrolyzes lysophospholipids to produce the signaling molecule lysophosphatidic acid (LPA) in extracellular fluids. Its major substrate is lysophosphatidylcholine. Can also act on sphingosylphosphorylcholine producing sphingosine-1-phosphate, a modulator of cell motility. Can hydrolyze, in vitro, bis-pNPP, to some extent pNP-TMP, and barely ATP. Involved in several motility-related processes such as angiogenesis and neurite outgrowth. Acts as an angiogenic factor by stimulating migration of smooth muscle cells and microtubule formation. Stimulates migration of melanoma cells, probably via a pertussis toxin-sensitive G protein. May have a role in induction of parturition. Possible involvement in cell proliferation and adipose tissue development. Required for LPA production in activated platelets, cleaves the sn-1 lysophospholipids to generate sn-1 lysophosphatidic acids containing predominantly 18:2 and 20:4 fatty acids. Shows a preference for the sn-1 to the sn-2 isomer of 1-O-alkyl-sn-glycero-3-phosphocholine (lyso-PAF). The polypeptide is Autotaxin (Homo sapiens (Human)).